The following is a 320-amino-acid chain: o-succinylbenzoate synthase (320 aa).

The active-site Proton donor is the Lys133. Mg(2+)-binding residues include Asp161, Glu190, and Asp213. The active-site Proton acceptor is the Lys235.

It belongs to the mandelate racemase/muconate lactonizing enzyme family. MenC type 1 subfamily. A divalent metal cation serves as cofactor.

It catalyses the reaction (1R,6R)-6-hydroxy-2-succinyl-cyclohexa-2,4-diene-1-carboxylate = 2-succinylbenzoate + H2O. Its pathway is quinol/quinone metabolism; 1,4-dihydroxy-2-naphthoate biosynthesis; 1,4-dihydroxy-2-naphthoate from chorismate: step 4/7. It participates in quinol/quinone metabolism; menaquinone biosynthesis. In terms of biological role, converts 2-succinyl-6-hydroxy-2,4-cyclohexadiene-1-carboxylate (SHCHC) to 2-succinylbenzoate (OSB). The polypeptide is o-succinylbenzoate synthase (Escherichia coli (strain K12 / MC4100 / BW2952)).